A 291-amino-acid chain; its full sequence is uncharacterized protein (291 aa).

Residues 1 to 58 (MDLKWLQTFIAAAESESFREAAEHLYLTQPAVSQHMRKLEDELDMRLFLHSGRRVVLT) enclose the HTH lysR-type domain. The H-T-H motif DNA-binding region spans 18-37 (FREAAEHLYLTQPAVSQHMR).

Belongs to the LysR transcriptional regulatory family.

This is an uncharacterized protein from Bacillus subtilis (strain 168).